Consider the following 466-residue polypeptide: Asparagine--tRNA ligase (466 aa).

This sequence belongs to the class-II aminoacyl-tRNA synthetase family. As to quaternary structure, homodimer.

Its subcellular location is the cytoplasm. It carries out the reaction tRNA(Asn) + L-asparagine + ATP = L-asparaginyl-tRNA(Asn) + AMP + diphosphate + H(+). The sequence is that of Asparagine--tRNA ligase from Shewanella sediminis (strain HAW-EB3).